The chain runs to 129 residues: MTPPAIPAAPPATGPAAATDPLDALRARLDAADAALLDAVRTRLDICLRIGEYKRLHQVPMMQPHRIAQVHANAARYAADHGIDPAFLRTLYDTIITETCRLEDEWIASGGAPVPTPVHASASARGAVS.

Positions 16–107 (AAATDPLDAL…ETCRLEDEWI (92 aa)) constitute a Chorismate mutase domain.

The catalysed reaction is 4-amino-4-deoxychorismate = 4-amino-4-deoxyprephenate. The protein operates within antibiotic biosynthesis. Its function is as follows. Involved in pristinamycin I biosynthesis. Probably catalyzes the conversion of 4-amino-4-deoxychorismate to 4-amino-4-deoxyprephenate. The sequence is that of 4-amino-4-deoxychorismate mutase from Streptomyces pristinaespiralis.